The following is a 118-amino-acid chain: Co-chaperonin GroES (118 aa).

It belongs to the GroES chaperonin family. Heptamer of 7 subunits arranged in a ring. Interacts with the chaperonin GroEL.

It is found in the cytoplasm. Its function is as follows. Together with the chaperonin GroEL, plays an essential role in assisting protein folding. The GroEL-GroES system forms a nano-cage that allows encapsulation of the non-native substrate proteins and provides a physical environment optimized to promote and accelerate protein folding. GroES binds to the apical surface of the GroEL ring, thereby capping the opening of the GroEL channel. This is Co-chaperonin GroES from Helicobacter acinonychis (strain Sheeba).